The sequence spans 4074 residues: Fibrocystin (4074 aa).

The N-terminal stretch at 1–22 (MIVWLISLMSIEILLLAGPALS) is a signal peptide. N-linked (GlcNAc...) asparagine glycans are attached at residues N54 and N224. In terms of domain architecture, IPT/TIG 1 spans 258-310 (EILSVFPETGSLGGKTDIIITGDFFDNPALVTIAGVPCDIRHMSPRKIECTTR). The PA14 domain maps to 323–483 (AGNRGLLFEV…TWLNPDVVST (161 aa)). N-linked (GlcNAc...) asparagine glycans are attached at residues N355, N385, N518, N527, N640, N710, N741, N822, N829, N868, N953, N966, N976, N1006, N1059, N1083, N1115, N1134, N1233, N1240, N1274, N1284, N1308, N1319, N1342, N1373, N1445, N1456, N1471, N1490, N1528, N1560, N1578, N1598, N1627, N1694, N1760, N1775, N1789, N1875, N1915, N1941, N1955, N2030, N2111, and N2140. The 57-residue stretch at 944–1000 (SLLIYIFGINFSGDPQALEIMVNKTNCKVIFSNQTNVICQTDLLPVGMHRLFMVVRP) folds into the IPT/TIG 2 domain. IPT/TIG domains follow at residues 1018–1101 (PRLD…AFTY), 1107–1186 (PVIT…RSPG), and 1199–1274 (SIEP…WAGN). The 80-residue stretch at 1385 to 1464 (PWIMAISPTH…LNVTVIVNGL (80 aa)) folds into the IPT/TIG 6 domain. The 69-residue stretch at 1573–1641 (HYFPKNFSIH…LVIEVDGLSY (69 aa)) folds into the IPT/TIG 7 domain. The G8 1 domain occupies 1928 to 2049 (HSWFPERVPQ…PEVTFTHLQA (122 aa)). PbH1 repeat units lie at residues 2245–2267 (TLGLKVDSNIFYNILGHALLVGT), 2288–2322 (EQGNIIRNNVIISISGTEGLSSPEMLTPSGIYILN), 2351–2373 (APLLSFTQNIAHSCTRYGLFIYP), 2383–2404 (RGPTLFQNFTVWGSAGGARISR), and 2405–2427 (SSNLHLKNFQVYSCRDFGIDILE). The N-linked (GlcNAc...) asparagine glycan is linked to N2390. 10 N-linked (GlcNAc...) asparagine glycosylation sites follow: N2431, N2467, N2531, N2549, N2579, N2591, N2749, N2764, N2972, and N3004. The PbH1 6 repeat unit spans residues 2460–2483 (RWELIISNTTFVNFDLTDCVSIRT). In terms of domain architecture, G8 2 spans 2743–2869 (EGWGGHNHTI…PKKSWTRLAA (127 aa)). One copy of the PbH1 7 repeat lies at 3029–3051 (SHGIILNDNIVFGTVGHGIDLEG). An N-linked (GlcNAc...) asparagine glycan is attached at N3053. One copy of the PbH1 8 repeat lies at 3082–3104 (AKDINLYGNVVAGSERIGFHIQG). N-linked (GlcNAc...) asparagine glycans are attached at residues N3136, N3165, N3221, N3484, N3702, N3721, and N3833. A PbH1 9 repeat occupies 3158 to 3183 (ENSVEIENITLVDNSIGLLATVYVSS). Residues 3854-3874 (IILAVSLCSVASWLALCCLVC) form a helical membrane-spanning segment. A ciliary targeting sequence (CST) region spans residues 3871-3888 (CLVCCWFRKSKSRKIKSE). Disordered regions lie at residues 3896–3919 (NDQKSHIHMSSKHPRSQETKKEDT), 3943–3965 (NGVSRRKVSRRAVREEGSSREED), and 4031–4074 (LQGQ…QEQL). 2 stretches are compositionally biased toward basic and acidic residues: residues 3910 to 3919 (RSQETKKEDT) and 3954 to 3965 (AVREEGSSREED). The segment at 3947–3976 (RRKVSRRAVREEGSSREEDVVPAPRIISIT) is nuclear localization signal (NLS).

As to quaternary structure, interacts with CAMLG. Interacts with PKD2. Interacts (via CST) with ARF4; this interaction allows an efficient PKHD1 trafficking to the cilium. Interacts (via CST) with RAB8A; this interaction controls trafficking through the endomembrane systeme and to the cilium. Interacts (via CST) with TULP3; this interaction allows PKHD1 trafficking to the cilium. Palmitoylated. Palmitoylation facilitates the trafficking to the cilia and membrane targeting. In terms of processing, N-glycosylated. Post-translationally, several proteolytic cleavages occur within the extracellular domain, whereas at least one cleavage occurs within the cytoplasmic domain. Cleaved by a probable proprotein convertase which produces an extracellular domain (polyductin extracellular domain, (PECD)) and a C-terminal fragment (polyductin transmembrane fragment (PTM)) which are tethered together by disulfide bonds. This extracellular domain (PECD) is then shed from the primary cilium by activation of a member of the ADAM metalloproteinase disintegrins family, resulting in concomitant release of an intra-cellular C-terminal fragment (ICD) via a gamma-secretase-dependent process. The proteolytic cleavage of the C-terminal intracellular fragment (ICD) is controlled by cytosolic calcium concentration and activation of PKC.

The protein resides in the cell membrane. It localises to the cytoplasm. The protein localises to the apical cell membrane. Its subcellular location is the cytoskeleton. It is found in the cilium basal body. The protein resides in the cell projection. It localises to the cilium. The protein localises to the spindle. Its subcellular location is the chromosome. It is found in the centromere. The protein resides in the nucleus. It localises to the secreted. The protein localises to the extracellular exosome. Its subcellular location is the endoplasmic reticulum. It is found in the golgi apparatus. In terms of biological role, promotes ciliogenesis in renal epithelial cells and therefore participates in the tubules formation and/ or ensures the maintenance of the architecture of the lumen of the kidney. Has an impact on cellular symmetry by ensuring correct bipolar cell division through the regulation of centrosome duplication and mitotic spindle assembly and by maintaining oriented cell division (OCD) during tubular elongation through planar cell polarity (PCP) pathway. During epithelial cell morphogenesis, it also regulates cell-cell and cell-matrix adhesion and participates in cell motility. Promotes cell-cell contact through the positive regulation of PTK2 kinase activity leading to either positive regulation of epithelial cell proliferation through the HRAS/RAF1 pathways, or negative regulation of apoptosis through the PDK1/AKT1 pathway. May act in collecting-duct and biliary differentiation. May participate in the regulation of the cholangiocytes proliferation and the CCN2 production in an CXCL8-dependent manner. The chain is Fibrocystin from Canis lupus familiaris (Dog).